Reading from the N-terminus, the 181-residue chain is Nucleoside-triphosphatase THEP1 (181 aa).

Residues 12–19 and 104–111 contribute to the ATP site; these read GPVGSIKS and VIVIDEIG.

Belongs to the THEP1 NTPase family.

The enzyme catalyses a ribonucleoside 5'-triphosphate + H2O = a ribonucleoside 5'-diphosphate + phosphate + H(+). Functionally, has nucleotide phosphatase activity towards ATP, GTP, CTP, TTP and UTP. May hydrolyze nucleoside diphosphates with lower efficiency. The protein is Nucleoside-triphosphatase THEP1 of Thermoplasma acidophilum (strain ATCC 25905 / DSM 1728 / JCM 9062 / NBRC 15155 / AMRC-C165).